The chain runs to 157 residues: Transcriptional repressor NrdR (157 aa).

The segment at 3 to 34 is a zinc-finger region; that stretch reads CPFCNTVDTKVIDSRLVSEGSQIKRRRQCAIC. The ATP-cone domain occupies 49–139; sequence PRVIKNDDLL…VYRSFEDVRE (91 aa).

Belongs to the NrdR family. Zn(2+) is required as a cofactor.

Functionally, negatively regulates transcription of bacterial ribonucleotide reductase nrd genes and operons by binding to NrdR-boxes. The chain is Transcriptional repressor NrdR from Hamiltonella defensa subsp. Acyrthosiphon pisum (strain 5AT).